The sequence spans 462 residues: UDP-N-acetylmuramate--L-alanine ligase (462 aa).

117 to 123 is an ATP binding site; that stretch reads GTHGKTT.

It belongs to the MurCDEF family.

Its subcellular location is the cytoplasm. It catalyses the reaction UDP-N-acetyl-alpha-D-muramate + L-alanine + ATP = UDP-N-acetyl-alpha-D-muramoyl-L-alanine + ADP + phosphate + H(+). Its pathway is cell wall biogenesis; peptidoglycan biosynthesis. Functionally, cell wall formation. The chain is UDP-N-acetylmuramate--L-alanine ligase from Streptomyces coelicolor (strain ATCC BAA-471 / A3(2) / M145).